The sequence spans 906 residues: Protein translocase subunit SecA (906 aa).

ATP contacts are provided by residues Gln-86, 104–108 (GEGKT), and Asp-511. Basic and acidic residues-rich tracts occupy residues 853–865 (HESV…RHDE) and 877–888 (VRREGPKVKRND). The interval 853–906 (HESVIDNNQRHDEDEQEETPKVQQVRREGPKVKRNDPCPCGSGKKYKQCHGKVE) is disordered. Positions 890, 892, 901, and 902 each coordinate Zn(2+). Residues 896–906 (KKYKQCHGKVE) show a composition bias toward basic residues.

This sequence belongs to the SecA family. In terms of assembly, monomer and homodimer. Part of the essential Sec protein translocation apparatus which comprises SecA, SecYEG and auxiliary proteins SecDF-YajC and YidC. Zn(2+) is required as a cofactor.

It is found in the cell inner membrane. Its subcellular location is the cytoplasm. The enzyme catalyses ATP + H2O + cellular proteinSide 1 = ADP + phosphate + cellular proteinSide 2.. Its function is as follows. Part of the Sec protein translocase complex. Interacts with the SecYEG preprotein conducting channel. Has a central role in coupling the hydrolysis of ATP to the transfer of proteins into and across the cell membrane, serving both as a receptor for the preprotein-SecB complex and as an ATP-driven molecular motor driving the stepwise translocation of polypeptide chains across the membrane. This chain is Protein translocase subunit SecA, found in Francisella tularensis subsp. novicida (strain U112).